The following is a 312-amino-acid chain: Acetyl-coenzyme A carboxylase carboxyl transferase subunit alpha (312 aa).

Residues 36 to 286 (RLDKEVKSIY…KEYFLDALRT (251 aa)) enclose the CoA carboxyltransferase C-terminal domain.

This sequence belongs to the AccA family. As to quaternary structure, acetyl-CoA carboxylase is a heterohexamer composed of biotin carboxyl carrier protein (AccB), biotin carboxylase (AccC) and two subunits each of ACCase subunit alpha (AccA) and ACCase subunit beta (AccD).

It localises to the cytoplasm. The catalysed reaction is N(6)-carboxybiotinyl-L-lysyl-[protein] + acetyl-CoA = N(6)-biotinyl-L-lysyl-[protein] + malonyl-CoA. Its pathway is lipid metabolism; malonyl-CoA biosynthesis; malonyl-CoA from acetyl-CoA: step 1/1. Component of the acetyl coenzyme A carboxylase (ACC) complex. First, biotin carboxylase catalyzes the carboxylation of biotin on its carrier protein (BCCP) and then the CO(2) group is transferred by the carboxyltransferase to acetyl-CoA to form malonyl-CoA. The polypeptide is Acetyl-coenzyme A carboxylase carboxyl transferase subunit alpha (Helicobacter pylori (strain J99 / ATCC 700824) (Campylobacter pylori J99)).